Here is a 371-residue protein sequence, read N- to C-terminus: Putative ribonuclease 3 (371 aa).

The region spanning 10–136 (AKSVKDKYIP…FLGAVCMAVD (127 aa)) is the RNase III domain.

This sequence belongs to the IIV-6 142R family.

It carries out the reaction Endonucleolytic cleavage to 5'-phosphomonoester.. Functionally, digests double-stranded RNA. This Frog virus 3 (isolate Goorha) (FV-3) protein is Putative ribonuclease 3.